The chain runs to 363 residues: Cyanide hydratase (363 aa).

The 280-residue stretch at 6 to 285 folds into the CN hydrolase domain; it reads YKAACVTSEP…DGLLFVDIDL (280 aa). Residue E46 is the Proton acceptor of the active site. The active site involves K128. Residue C163 is the Nucleophile of the active site.

The protein belongs to the carbon-nitrogen hydrolase superfamily. Nitrilase family. In terms of assembly, oligomer of dimers, forming left-handed helical fibers.

The enzyme catalyses formamide = hydrogen cyanide + H2O. Catalyzes the hydration of cyanide to formamide. Degradation of cyanide may be important for plant pathogenic fungi in infection of cyanogenic plants. This is Cyanide hydratase (CyhAB) from Alternaria brassicicola (Dark leaf spot agent).